The sequence spans 293 residues: Pantothenate synthetase (293 aa).

30–37 contacts ATP; it reads MGYLHKGH. Residue His37 is the Proton donor of the active site. Residue Gln61 coordinates (R)-pantoate. Gln61 is a beta-alanine binding site. 147–150 is a binding site for ATP; the sequence is GEKD. Position 153 (Gln153) interacts with (R)-pantoate. ATP contacts are provided by residues Val176 and 184 to 187; that span reads CSSR.

Belongs to the pantothenate synthetase family. In terms of assembly, homodimer.

It localises to the cytoplasm. It carries out the reaction (R)-pantoate + beta-alanine + ATP = (R)-pantothenate + AMP + diphosphate + H(+). It participates in cofactor biosynthesis; (R)-pantothenate biosynthesis; (R)-pantothenate from (R)-pantoate and beta-alanine: step 1/1. In terms of biological role, catalyzes the condensation of pantoate with beta-alanine in an ATP-dependent reaction via a pantoyl-adenylate intermediate. The sequence is that of Pantothenate synthetase from Brucella abortus (strain S19).